The following is a 230-amino-acid chain: Heptaprenylglyceryl phosphate synthase (230 aa).

Position 12 (lysine 12) interacts with sn-glycerol 1-phosphate. Mg(2+) is bound by residues aspartate 14 and threonine 40. Residues 159–164 (YIEYSG), glycine 189, and 209–210 (GD) each bind sn-glycerol 1-phosphate.

This sequence belongs to the GGGP/HepGP synthase family. Group I subfamily. As to quaternary structure, homodimer. The cofactor is Mg(2+).

It carries out the reaction sn-glycerol 1-phosphate + all-trans-heptaprenyl diphosphate = 3-heptaprenyl-sn-glycero-1-phosphate + diphosphate. It functions in the pathway membrane lipid metabolism; glycerophospholipid metabolism. Its function is as follows. Prenyltransferase that catalyzes in vivo the transfer of the heptaprenyl moiety of heptaprenyl pyrophosphate (HepPP; 35 carbon atoms) to the C3 hydroxyl of sn-glycerol-1-phosphate (G1P), producing heptaprenylglyceryl phosphate (HepGP). This reaction is an ether-bond-formation step in the biosynthesis of archaea-type G1P-based membrane lipids found in Bacillales. This Staphylococcus aureus (strain JH1) protein is Heptaprenylglyceryl phosphate synthase.